A 256-amino-acid chain; its full sequence is MIKRVNKLVLGISFLFLIISIFAGCGTGKEAEIKKSFEKTLSMYPIKNLEDLYDKEGYRDDQFDKNDKGTWIVRSSMSIQSNGKDMNIKGMVLYMNRNTRTTNGYYYVDVIEREDKGIHRDNEKRYPVKMVDNKIIPTKEIKDEKIKKEIENFKFFVQYGDFKDLSKYKDGDISYNPEVPSYSAKYQLTNDDYNVKQLRKRYNIPTNKAPKLLLKGTGNLKGSSIGYKKIEFTFVEKKGENIYFSDGLHFNPSEDK.

The signal sequence occupies residues 1–24; that stretch reads MIKRVNKLVLGISFLFLIISIFAG. A lipid anchor (N-palmitoyl cysteine) is attached at cysteine 25. Cysteine 25 carries the S-diacylglycerol cysteine lipid modification.

Belongs to the staphylococcal tandem lipoprotein family.

The protein resides in the cell membrane. This is an uncharacterized protein from Staphylococcus aureus (strain Mu50 / ATCC 700699).